Reading from the N-terminus, the 626-residue chain is FAD-binding monooxygenase moxY (626 aa).

The segment covering 1 to 23 has biased composition (low complexity); the sequence is MAPFLSAHGESASSSSSSSPTPS. A disordered region spans residues 1–47; that stretch reads MAPFLSAHGESASSSSSSSPTPSRHTRNQHVDYSTPGSTGYNIPQNT. Residues 31–47 show a composition bias toward polar residues; sequence VDYSTPGSTGYNIPQNT. FAD is bound by residues 96–99, 108–109, and Y114; these read TWLE and DI. Residue 106–108 coordinates NADP(+); it reads GCD. NADP(+) contacts are provided by residues 243 to 249 and 266 to 267; these read SGASSIQ and RT.

This sequence belongs to the FAD-binding monooxygenase family. FAD is required as a cofactor.

Its pathway is mycotoxin biosynthesis. Its function is as follows. FAD-binding monooxygenase; part of the fragmented gene cluster that mediates the biosynthesis of dothistromin (DOTH), a polyketide toxin very similar in structure to the aflatoxin precursor, versicolorin B. The first step of the pathway is the conversion of acetate to norsolorinic acid (NOR) and requires the fatty acid synthase subunits hexA and hexB, as well as the polyketide synthase pksA. PksA combines a hexanoyl starter unit and 7 malonyl-CoA extender units to synthesize the precursor NOR. The hexanoyl starter unit is provided to the acyl-carrier protein (ACP) domain by the fungal fatty acid synthase hexA/hexB. The second step is the conversion of NOR to averantin (AVN) and requires the norsolorinic acid ketoreductase nor1, which catalyzes the dehydration of norsolorinic acid to form (1'S)-averantin. The cytochrome P450 monooxygenase avnA then catalyzes the hydroxylation of AVN to 5'hydroxyaverantin (HAVN). The next step is performed by adhA that transforms HAVN to averufin (AVF). Averufin might then be converted to hydroxyversicolorone by cypX and avfA. Hydroxyversicolorone is further converted versiconal hemiacetal acetate (VHA) by moxY. VHA is then the substrate for the versiconal hemiacetal acetate esterase est1 to yield versiconal (VAL). Versicolorin B synthase vbsA then converts VAL to versicolorin B (VERB) by closing the bisfuran ring. Then, the activity of the versicolorin B desaturase verB leads to versicolorin A (VERA). DotB, a predicted chloroperoxidase, may perform epoxidation of the A-ring of VERA. Alternatively, a cytochrome P450, such as cypX or avnA could catalyze this step. It is also possible that another, uncharacterized, cytochrome P450 enzyme is responsible for this step. Opening of the epoxide could potentially be achieved by the epoxide hydrolase epoA. However, epoA seems not to be required for DOTH biosynthesis, but other epoxide hydrolases may have the ability to complement this hydrolysis. Alternatively, opening of the epoxide ring could be achieved non-enzymatically. The next step is the deoxygenation of ring A to yield the 5,8-dihydroxyanthraquinone which is most likely catalyzed by the NADPH dehydrogenase encoded by ver1. The last stages of DOTH biosynthesis are proposed to involve hydroxylation of the bisfuran. OrdB and norB might have oxidative roles here. An alternative possibility is that cytochrome P450 monoogenases such as avnA and cypX might perform these steps in addition to previously proposed steps. The sequence is that of FAD-binding monooxygenase moxY from Dothistroma septosporum (Red band needle blight fungus).